Here is a 349-residue protein sequence, read N- to C-terminus: tRNA pseudouridine synthase D (349 aa).

Phenylalanine 27 contacts substrate. The active-site Nucleophile is the aspartate 80. Residue asparagine 129 participates in substrate binding. Residues 155–303 enclose the TRUD domain; that stretch reads GVPNYFGAQR…VEAARRAMLL (149 aa). Phenylalanine 329 contacts substrate.

It belongs to the pseudouridine synthase TruD family.

The enzyme catalyses uridine(13) in tRNA = pseudouridine(13) in tRNA. In terms of biological role, responsible for synthesis of pseudouridine from uracil-13 in transfer RNAs. The protein is tRNA pseudouridine synthase D of Escherichia coli O45:K1 (strain S88 / ExPEC).